A 192-amino-acid polypeptide reads, in one-letter code: UPF0312 protein Avin_03250 (192 aa).

The first 23 residues, 1 to 23, serve as a signal peptide directing secretion; sequence MLKKTLAALALGSALLGAGQAMA.

It belongs to the UPF0312 family. Type 1 subfamily.

It is found in the periplasm. The sequence is that of UPF0312 protein Avin_03250 from Azotobacter vinelandii (strain DJ / ATCC BAA-1303).